We begin with the raw amino-acid sequence, 295 residues long: Ribosomal protein L11 methyltransferase (295 aa).

4 residues coordinate S-adenosyl-L-methionine: Thr146, Gly167, Asp189, and Asn231.

The protein belongs to the methyltransferase superfamily. PrmA family.

The protein localises to the cytoplasm. It carries out the reaction L-lysyl-[protein] + 3 S-adenosyl-L-methionine = N(6),N(6),N(6)-trimethyl-L-lysyl-[protein] + 3 S-adenosyl-L-homocysteine + 3 H(+). In terms of biological role, methylates ribosomal protein L11. In Vibrio campbellii (strain ATCC BAA-1116), this protein is Ribosomal protein L11 methyltransferase.